A 345-amino-acid chain; its full sequence is Inositol 2-dehydrogenase (345 aa).

It belongs to the Gfo/Idh/MocA family. As to quaternary structure, homotetramer.

The enzyme catalyses myo-inositol + NAD(+) = scyllo-inosose + NADH + H(+). In terms of biological role, involved in the oxidation of myo-inositol (MI) to 2-keto-myo-inositol (2KMI or 2-inosose). This is Inositol 2-dehydrogenase from Mycolicibacterium smegmatis (strain ATCC 700084 / mc(2)155) (Mycobacterium smegmatis).